Consider the following 270-residue polypeptide: Formamidopyrimidine-DNA glycosylase (270 aa).

Pro-2 serves as the catalytic Schiff-base intermediate with DNA. Catalysis depends on Glu-3, which acts as the Proton donor. Residue Lys-58 is the Proton donor; for beta-elimination activity of the active site. Residues His-91, Arg-110, and Arg-151 each contribute to the DNA site. An FPG-type zinc finger spans residues 236–270; that stretch reads FVYGRGGEFCKVCGSTLREIRLGQRASVYCPRCQR. The active-site Proton donor; for delta-elimination activity is the Arg-260.

This sequence belongs to the FPG family. Monomer. Requires Zn(2+) as cofactor.

It catalyses the reaction Hydrolysis of DNA containing ring-opened 7-methylguanine residues, releasing 2,6-diamino-4-hydroxy-5-(N-methyl)formamidopyrimidine.. The enzyme catalyses 2'-deoxyribonucleotide-(2'-deoxyribose 5'-phosphate)-2'-deoxyribonucleotide-DNA = a 3'-end 2'-deoxyribonucleotide-(2,3-dehydro-2,3-deoxyribose 5'-phosphate)-DNA + a 5'-end 5'-phospho-2'-deoxyribonucleoside-DNA + H(+). Its function is as follows. Involved in base excision repair of DNA damaged by oxidation or by mutagenic agents. Acts as a DNA glycosylase that recognizes and removes damaged bases. Has a preference for oxidized purines, such as 7,8-dihydro-8-oxoguanine (8-oxoG). Has AP (apurinic/apyrimidinic) lyase activity and introduces nicks in the DNA strand. Cleaves the DNA backbone by beta-delta elimination to generate a single-strand break at the site of the removed base with both 3'- and 5'-phosphates. The chain is Formamidopyrimidine-DNA glycosylase from Pseudomonas aeruginosa (strain LESB58).